The chain runs to 247 residues: NAD-dependent protein deacetylase 2 (247 aa).

In terms of domain architecture, Deacetylase sirtuin-type spans 1–247; sequence MDQIRQLAQW…ASVRKQIQAE (247 aa). Residues alanine 23, threonine 27, phenylalanine 34, arginine 35, glutamine 103, isoleucine 105, aspartate 106, and histidine 121 each coordinate NAD(+). A nicotinamide-binding site is contributed by phenylalanine 34. The nicotinamide site is built by isoleucine 105 and aspartate 106. The active-site Proton acceptor is histidine 121. Cysteine 129, cysteine 132, cysteine 149, and cysteine 152 together coordinate Zn(2+). The NAD(+) site is built by threonine 188, serine 189, asparagine 215, and isoleucine 233.

Belongs to the sirtuin family. Class U subfamily. Zn(2+) is required as a cofactor.

It localises to the cytoplasm. The enzyme catalyses N(6)-acetyl-L-lysyl-[protein] + NAD(+) + H2O = 2''-O-acetyl-ADP-D-ribose + nicotinamide + L-lysyl-[protein]. NAD-dependent protein deacetylase which modulates the activities of several enzymes which are inactive in their acetylated form. The polypeptide is NAD-dependent protein deacetylase 2 (Geobacillus kaustophilus (strain HTA426)).